We begin with the raw amino-acid sequence, 74 residues long: ATP synthase subunit 9, mitochondrial (74 aa).

2 helical membrane passes run 8-28 (IGAGAATIALAGAAVGIGNVF) and 50-70 (ILGFALTEAIALFALMMAFLI).

The protein belongs to the ATPase C chain family. As to quaternary structure, F-type ATPases have 2 components, CF(1) - the catalytic core - and CF(0) - the membrane proton channel. CF(1) has five subunits: alpha(3), beta(3), gamma(1), delta(1), epsilon(1). CF(0) has three main subunits: a, b and c.

Its subcellular location is the mitochondrion membrane. Its function is as follows. This protein is one of the chains of the nonenzymatic membrane component (F0) of mitochondrial ATPase. This is ATP synthase subunit 9, mitochondrial (ATP9) from Triticum aestivum (Wheat).